The sequence spans 505 residues: ATP synthase subunit alpha, chloroplastic (505 aa).

172 to 179 (GDRQTGKT) is a binding site for ATP.

This sequence belongs to the ATPase alpha/beta chains family. In terms of assembly, F-type ATPases have 2 components, CF(1) - the catalytic core - and CF(0) - the membrane proton channel. CF(1) has five subunits: alpha(3), beta(3), gamma(1), delta(1), epsilon(1). CF(0) has four main subunits: a, b, b' and c.

It is found in the plastid. The protein localises to the chloroplast thylakoid membrane. The enzyme catalyses ATP + H2O + 4 H(+)(in) = ADP + phosphate + 5 H(+)(out). Functionally, produces ATP from ADP in the presence of a proton gradient across the membrane. The alpha chain is a regulatory subunit. This Antithamnion sp. (Red alga) protein is ATP synthase subunit alpha, chloroplastic.